Consider the following 53-residue polypeptide: UPF0391 membrane protein Bxeno_A1464 (53 aa).

Helical transmembrane passes span 5 to 25 (AAIF…GIAA) and 30 to 50 (IAKV…LMGV).

It belongs to the UPF0391 family.

The protein localises to the cell membrane. The chain is UPF0391 membrane protein Bxeno_A1464 from Paraburkholderia xenovorans (strain LB400).